Here is a 186-residue protein sequence, read N- to C-terminus: 2-oxoglutarate synthase subunit KorC (186 aa).

Heterotetramer of the KorA, KorB, KorC and KorD subunits.

The catalysed reaction is 2 oxidized [2Fe-2S]-[ferredoxin] + 2-oxoglutarate + CoA = succinyl-CoA + 2 reduced [2Fe-2S]-[ferredoxin] + CO2 + H(+). This is 2-oxoglutarate synthase subunit KorC (korC) from Methanothermobacter marburgensis (strain ATCC BAA-927 / DSM 2133 / JCM 14651 / NBRC 100331 / OCM 82 / Marburg) (Methanobacterium thermoautotrophicum).